Here is a 610-residue protein sequence, read N- to C-terminus: Zinc metalloproteinase-disintegrin-like BITM06A (610 aa).

Positions 1-20 (MIQVLLVTICLAAFPYQGSS) are cleaved as a signal peptide. Residues 21–189 (IILESGNVND…KKASQLVVTA (169 aa)) constitute a propeptide that is removed on maturation. The Peptidase M12B domain occupies 198-394 (RYVELFIVVD…ENPQCILNEP (197 aa)). Positions 201 and 285 each coordinate Ca(2+). Cystine bridges form between cysteine 309–cysteine 389, cysteine 349–cysteine 373, and cysteine 351–cysteine 356. Residue histidine 334 participates in Zn(2+) binding. Glutamate 335 is a catalytic residue. Histidine 338 and histidine 344 together coordinate Zn(2+). Asparagine 372 carries an N-linked (GlcNAc...) asparagine glycan. 8 residues coordinate Ca(2+): cysteine 389, asparagine 392, valine 404, asparagine 407, leucine 409, glutamate 411, glutamate 414, and aspartate 417. The Disintegrin domain occupies 402 to 488 (PPVCGNELLE…ECPADVFHKN (87 aa)). 14 disulfides stabilise this stretch: cysteine 405–cysteine 434, cysteine 416–cysteine 429, cysteine 418–cysteine 424, cysteine 428–cysteine 451, cysteine 442–cysteine 448, cysteine 447–cysteine 473, cysteine 460–cysteine 480, cysteine 467–cysteine 499, cysteine 492–cysteine 504, cysteine 511–cysteine 561, cysteine 526–cysteine 572, cysteine 539–cysteine 549, cysteine 556–cysteine 598, and cysteine 592–cysteine 603. The D/ECD-tripeptide motif lies at 466–468 (ECD). Ca(2+)-binding residues include aspartate 468, proline 469, glutamate 471, aspartate 483, and valine 484.

It belongs to the venom metalloproteinase (M12B) family. P-III subfamily. P-IIIa sub-subfamily. In terms of assembly, monomer. It depends on Zn(2+) as a cofactor. In terms of tissue distribution, expressed by the venom gland.

The protein resides in the secreted. Functionally, snake venom metalloproteinase that impairs hemostasis in the envenomed animal. The protein is Zinc metalloproteinase-disintegrin-like BITM06A of Bothrops insularis (Golden lancehead).